The sequence spans 299 residues: Palmitoyltransferase ZDHHC3 (299 aa).

The Cytoplasmic segment spans residues 1 to 47 (MMLIPTHHFRDIERKPEYLQPEKCAPPPFPGPVGTMWFIRDGCGIAC). Tyr-18 is modified (phosphotyrosine). A helical membrane pass occupies residues 48-68 (AIVTWFLVLYAEFVVLFVMLI). Residues 69–72 (PSRD) lie on the Lumenal side of the membrane. Residues 73 to 93 (YAYSIINGIVFNLLAFLALAS) traverse the membrane as a helical segment. The Cytoplasmic segment spans residues 94-171 (HCRAMLTDPG…NCVGENNQKY (78 aa)). One can recognise a DHHC domain in the interval 128–254 (KCPKCCSIKP…DETGIEQLKK (127 aa)). A lipid anchor (S-palmitoyl cysteine) is attached at Cys-146. Cys-157 serves as the catalytic S-palmitoyl cysteine intermediate. A helical transmembrane segment spans residues 172 to 192 (FVLFTMYIALISLHALIMVGF). The Lumenal segment spans residues 193-214 (HFLHCFEEDWTKCSSFSPPTTV). A helical membrane pass occupies residues 215 to 235 (ILLILLCFEALLFLIFTSVMF). Over 236–299 (GTQVHSICTD…GKADPYQYVV (64 aa)) the chain is Cytoplasmic.

This sequence belongs to the DHHC palmitoyltransferase family. As to quaternary structure, monomer. Homooligomers. The monomeric form has a higher catalytic activity. Forms heterooligomers with ZDHHC7. Interacts with TNFRSF10A. In terms of processing, phosphorylation by FGFR1 and SRC probably regulates the palmitoyltransferase activity. Autopalmitoylated.

The protein resides in the golgi apparatus membrane. It carries out the reaction L-cysteinyl-[protein] + hexadecanoyl-CoA = S-hexadecanoyl-L-cysteinyl-[protein] + CoA. The enzyme catalyses L-cysteinyl-[protein] + tetradecanoyl-CoA = S-tetradecanoyl-L-cysteinyl-[protein] + CoA. It catalyses the reaction L-cysteinyl-[protein] + octadecanoyl-CoA = S-octadecanoyl-L-cysteinyl-[protein] + CoA. Its function is as follows. Golgi-localized palmitoyltransferase that catalyzes the addition of palmitate onto various protein substrates. Has no stringent fatty acid selectivity and in addition to palmitate can also transfer onto target proteins myristate from tetradecanoyl-CoA and stearate from octadecanoyl-CoA. Plays an important role in G protein-coupled receptor signaling pathways involving GNAQ and potentially other heterotrimeric G proteins by regulating their dynamic association with the plasma membrane. Palmitoylates ITGA6 and ITGB4, thereby regulating the alpha-6/beta-4 integrin localization, expression and function in cell adhesion to laminin. Plays a role in the TRAIL-activated apoptotic signaling pathway most probably through the palmitoylation and localization to the plasma membrane of TNFRSF10A. In the brain, by palmitoylating the gamma subunit GABRG2 of GABA(A) receptors and regulating their postsynaptic accumulation, plays a role in synaptic GABAergic inhibitory function and GABAergic innervation. Palmitoylates the neuronal protein GAP43 which is also involved in the formation of GABAergic synapses. Palmitoylates NCDN thereby regulating its association with endosome membranes. Probably palmitoylates PRCD and is involved in its proper localization within the photoreceptor. Could mediate the palmitoylation of NCAM1 and regulate neurite outgrowth. Could palmitoylate DNAJC5 and regulate its localization to Golgi membranes. Also constitutively palmitoylates DLG4. May also palmitoylate SNAP25. Could palmitoylate the glutamate receptors GRIA1 and GRIA2 but this has not been confirmed in vivo. Could also palmitoylate the D(2) dopamine receptor DRD2. May also palmitoylate LAMTOR1, promoting its localization to lysosomal membranes. Palmitoylates the Toll-like receptor 9/TLR9 in the Golgi and thereby regulates TLR9 trafficking to endosomes. May palmitoylate CALHM1 and CALHM3 subunits of gustatory voltage-gated ion channels and modulate channel gating and kinetics. The polypeptide is Palmitoyltransferase ZDHHC3 (Rattus norvegicus (Rat)).